The chain runs to 371 residues: tRNA-specific 2-thiouridylase MnmA (371 aa).

ATP-binding positions include 16 to 23 (GMSGGVDS) and Met-42. Residues 102–104 (NPD) are interaction with target base in tRNA. Cys-107 acts as the Nucleophile in catalysis. A disulfide bond links Cys-107 and Cys-204. ATP is bound at residue Gly-132. An interaction with tRNA region spans residues 154–156 (KDQ). Cys-204 (cysteine persulfide intermediate) is an active-site residue. Residues 316-317 (RY) are interaction with tRNA.

Belongs to the MnmA/TRMU family.

It localises to the cytoplasm. The catalysed reaction is S-sulfanyl-L-cysteinyl-[protein] + uridine(34) in tRNA + AH2 + ATP = 2-thiouridine(34) in tRNA + L-cysteinyl-[protein] + A + AMP + diphosphate + H(+). In terms of biological role, catalyzes the 2-thiolation of uridine at the wobble position (U34) of tRNA, leading to the formation of s(2)U34. In Shewanella halifaxensis (strain HAW-EB4), this protein is tRNA-specific 2-thiouridylase MnmA.